The primary structure comprises 233 residues: Probable GTP-binding protein EngB (233 aa).

An EngB-type G domain is found at 21-228; sequence GLPEVALVGR…WRWIREHVQD (208 aa). Residues 29–36 and 56–60 contribute to the GTP site; these read GRSNVGKS and GRTQA. Positions 36 and 58 each coordinate Mg(2+). Positions 68 to 87 are disordered; sequence PQGKPRPEGEPQPDKDAGRT. Positions 72 to 85 are enriched in basic and acidic residues; it reads PRPEGEPQPDKDAG. GTP contacts are provided by residues 107–110, 174–177, and 207–209; these read DMPG, TKAD, and FSA.

The protein belongs to the TRAFAC class TrmE-Era-EngA-EngB-Septin-like GTPase superfamily. EngB GTPase family. Mg(2+) is required as a cofactor.

Necessary for normal cell division and for the maintenance of normal septation. This chain is Probable GTP-binding protein EngB, found in Symbiobacterium thermophilum (strain DSM 24528 / JCM 14929 / IAM 14863 / T).